A 243-amino-acid polypeptide reads, in one-letter code: DNA repair protein RecO (243 aa).

The protein belongs to the RecO family.

Its function is as follows. Involved in DNA repair and RecF pathway recombination. The protein is DNA repair protein RecO of Azoarcus sp. (strain BH72).